The following is a 494-amino-acid chain: MAKDQKKQPRPKAETPKGFRDYFGADVTERKQMLDRIAQIYHRHGFEPLETSAVETVEALGKFLPDVDRPNAGVFAWQEAEVPGGGAGDWLALRYDLTAPLARVAAQFRGDLPSPYRRYAMGPVWRNEKPGPGRFRQFYQCDADTVGSASVAADAEICAMLAAALEHAGIRRGDYLIRINNRKVLNGILESMGVAEGKPADDVLRTIDKFDKVGEQGVRQLLTTGRKDESGAFIEGVGLSPEQAEPVLAFLTSKGADNAGTLANLRAAVGASATGAEGVEELAQIARMLAAMGVGEERAIVDPSIVRGLGYYTGPVFEAELTFEILDDKGRKRQFGSVAGGGRYDGLVERFTGQKVPATGVSIGVDRLLAALRAKGLMGGTEQGPVVVTVMDRERMADYQAMAAELRAAGIRAEVYLGNPKNFGNQLKYADKRNAPVAIIQGGDEAARGVVQVKDLVLGAKIAAEASHEEWKAQPAQTEVARADLVAEVRRILG.

The interval 1–20 (MAKDQKKQPRPKAETPKGFR) is disordered.

This sequence belongs to the class-II aminoacyl-tRNA synthetase family. In terms of assembly, homodimer.

It localises to the cytoplasm. The catalysed reaction is tRNA(His) + L-histidine + ATP = L-histidyl-tRNA(His) + AMP + diphosphate + H(+). This Paracoccus denitrificans (strain Pd 1222) protein is Histidine--tRNA ligase.